The chain runs to 176 residues: Ribosome maturation factor RimM (176 aa).

Residues 97-176 (EDEFYWRDLI…QILVDWDPDF (80 aa)) enclose the PRC barrel domain.

It belongs to the RimM family. Binds ribosomal protein uS19.

The protein resides in the cytoplasm. In terms of biological role, an accessory protein needed during the final step in the assembly of 30S ribosomal subunit, possibly for assembly of the head region. Essential for efficient processing of 16S rRNA. May be needed both before and after RbfA during the maturation of 16S rRNA. It has affinity for free ribosomal 30S subunits but not for 70S ribosomes. This Shewanella sp. (strain ANA-3) protein is Ribosome maturation factor RimM.